We begin with the raw amino-acid sequence, 89 residues long: Small ribosomal subunit protein uS15 (89 aa).

Positions 1-24 (MALTQTKKQELISQYQAHETDTGS) are disordered.

It belongs to the universal ribosomal protein uS15 family. As to quaternary structure, part of the 30S ribosomal subunit. Forms a bridge to the 50S subunit in the 70S ribosome, contacting the 23S rRNA.

One of the primary rRNA binding proteins, it binds directly to 16S rRNA where it helps nucleate assembly of the platform of the 30S subunit by binding and bridging several RNA helices of the 16S rRNA. Functionally, forms an intersubunit bridge (bridge B4) with the 23S rRNA of the 50S subunit in the ribosome. In Microcystis aeruginosa (strain NIES-843 / IAM M-2473), this protein is Small ribosomal subunit protein uS15.